A 284-amino-acid polypeptide reads, in one-letter code: Pantothenate synthetase (284 aa).

An ATP-binding site is contributed by 30 to 37; that stretch reads MGNLHDGH. Histidine 37 (proton donor) is an active-site residue. Glutamine 61 is a binding site for (R)-pantoate. Glutamine 61 contributes to the beta-alanine binding site. Residue 149–152 participates in ATP binding; the sequence is GEKD. Glutamine 155 is a (R)-pantoate binding site. Residues isoleucine 178 and 186 to 189 each bind ATP; that span reads LSSR.

Belongs to the pantothenate synthetase family. As to quaternary structure, homodimer.

It is found in the cytoplasm. The catalysed reaction is (R)-pantoate + beta-alanine + ATP = (R)-pantothenate + AMP + diphosphate + H(+). The protein operates within cofactor biosynthesis; (R)-pantothenate biosynthesis; (R)-pantothenate from (R)-pantoate and beta-alanine: step 1/1. Catalyzes the condensation of pantoate with beta-alanine in an ATP-dependent reaction via a pantoyl-adenylate intermediate. The protein is Pantothenate synthetase of Salmonella paratyphi A (strain ATCC 9150 / SARB42).